The sequence spans 411 residues: Argininosuccinate synthase (411 aa).

ATP is bound by residues A13–S21 and A40. L-citrulline contacts are provided by Y91 and S96. ATP is bound at residue G121. 3 residues coordinate L-aspartate: T123, N127, and D128. N127 contributes to the L-citrulline binding site. Residues R131, S182, S191, E267, and Y279 each contribute to the L-citrulline site.

The protein belongs to the argininosuccinate synthase family. Type 1 subfamily. Homotetramer.

Its subcellular location is the cytoplasm. The catalysed reaction is L-citrulline + L-aspartate + ATP = 2-(N(omega)-L-arginino)succinate + AMP + diphosphate + H(+). It participates in amino-acid biosynthesis; L-arginine biosynthesis; L-arginine from L-ornithine and carbamoyl phosphate: step 2/3. The sequence is that of Argininosuccinate synthase from Bartonella tribocorum (strain CIP 105476 / IBS 506).